The primary structure comprises 1029 residues: Carbamoyl phosphate synthase large chain (1029 aa).

Residues 1–402 are carboxyphosphate synthetic domain; the sequence is MPKRTDLQTI…SLQKALRSTE (402 aa). ATP-binding residues include Arg129, Arg169, Gly175, Gly176, Glu208, Ile210, Glu215, Gly241, Val242, His243, Gln285, and Glu299. In terms of domain architecture, ATP-grasp 1 spans 133–328; that stretch reads QAAMKKIGVE…IAKIAALLAV (196 aa). Residues Gln285, Glu299, and Asn301 each contribute to the Mg(2+) site. Positions 285, 299, and 301 each coordinate Mn(2+). Residues 403-544 form an oligomerization domain region; sequence SDIRGVYAEM…YHYSTYEWED (142 aa). The carbamoyl phosphate synthetic domain stretch occupies residues 545-929; it reads EVTGTDKPKV…AFYRAQLGAK (385 aa). The ATP-grasp 2 domain maps to 671–863; the sequence is NALCERLGLS…LAKSAARIAV (193 aa). Positions 707, 747, 749, 754, 779, 780, 781, 782, 822, and 834 each coordinate ATP. The Mg(2+) site is built by Gln822, Glu834, and Asn836. Gln822, Glu834, and Asn836 together coordinate Mn(2+). One can recognise an MGS-like domain in the interval 930 to 1028; sequence SYLPLSGTAL…QDWQTQEAVA (99 aa). Residues 930–1029 form an allosteric domain region; that stretch reads SYLPLSGTAL…DWQTQEAVAG (100 aa).

The protein belongs to the CarB family. Composed of two chains; the small (or glutamine) chain promotes the hydrolysis of glutamine to ammonia, which is used by the large (or ammonia) chain to synthesize carbamoyl phosphate. Tetramer of heterodimers (alpha,beta)4. Mg(2+) serves as cofactor. The cofactor is Mn(2+).

It carries out the reaction hydrogencarbonate + L-glutamine + 2 ATP + H2O = carbamoyl phosphate + L-glutamate + 2 ADP + phosphate + 2 H(+). The enzyme catalyses hydrogencarbonate + NH4(+) + 2 ATP = carbamoyl phosphate + 2 ADP + phosphate + 2 H(+). The protein operates within amino-acid biosynthesis; L-arginine biosynthesis; carbamoyl phosphate from bicarbonate: step 1/1. It functions in the pathway pyrimidine metabolism; UMP biosynthesis via de novo pathway; (S)-dihydroorotate from bicarbonate: step 1/3. Its function is as follows. Large subunit of the glutamine-dependent carbamoyl phosphate synthetase (CPSase). CPSase catalyzes the formation of carbamoyl phosphate from the ammonia moiety of glutamine, carbonate, and phosphate donated by ATP, constituting the first step of 2 biosynthetic pathways, one leading to arginine and/or urea and the other to pyrimidine nucleotides. The large subunit (synthetase) binds the substrates ammonia (free or transferred from glutamine from the small subunit), hydrogencarbonate and ATP and carries out an ATP-coupled ligase reaction, activating hydrogencarbonate by forming carboxy phosphate which reacts with ammonia to form carbamoyl phosphate. This Deinococcus deserti (strain DSM 17065 / CIP 109153 / LMG 22923 / VCD115) protein is Carbamoyl phosphate synthase large chain.